The sequence spans 1408 residues: DNA-directed RNA polymerase subunit beta' (1408 aa).

Zn(2+) contacts are provided by C70, C72, C85, and C88. Mg(2+) contacts are provided by D460, D462, and D464. Zn(2+)-binding residues include C814, C888, C895, and C898.

It belongs to the RNA polymerase beta' chain family. As to quaternary structure, the RNAP catalytic core consists of 2 alpha, 1 beta, 1 beta' and 1 omega subunit. When a sigma factor is associated with the core the holoenzyme is formed, which can initiate transcription. Mg(2+) serves as cofactor. Requires Zn(2+) as cofactor.

It catalyses the reaction RNA(n) + a ribonucleoside 5'-triphosphate = RNA(n+1) + diphosphate. In terms of biological role, DNA-dependent RNA polymerase catalyzes the transcription of DNA into RNA using the four ribonucleoside triphosphates as substrates. This Serratia proteamaculans (strain 568) protein is DNA-directed RNA polymerase subunit beta'.